The primary structure comprises 335 residues: tRNA (adenine(58)-N(1))-methyltransferase catalytic subunit TRM61 (335 aa).

S-adenosyl-L-methionine-binding positions include 114–116, Glu135, Arg140, 162–163, and Asp183; these read SAS and DV. The segment covering 271–281 has biased composition (basic and acidic residues); it reads VMKKGPSEEPP. The disordered stretch occupies residues 271-302; the sequence is VMKKGPSEEPPAKLQKTDNGYKTPKKSTKVKE.

The protein belongs to the class I-like SAM-binding methyltransferase superfamily. TRM61 family. As to quaternary structure, heterotetramer; composed of two copies of TRM6 and two copies of TRM61.

It localises to the nucleus. It carries out the reaction adenosine(58) in tRNA + S-adenosyl-L-methionine = N(1)-methyladenosine(58) in tRNA + S-adenosyl-L-homocysteine + H(+). Functionally, catalytic subunit of tRNA (adenine-N(1)-)-methyltransferase, which catalyzes the formation of N(1)-methyladenine at position 58 (m1A58) in initiator methionyl-tRNA. The protein is tRNA (adenine(58)-N(1))-methyltransferase catalytic subunit TRM61 (TRM61) of Candida albicans (strain SC5314 / ATCC MYA-2876) (Yeast).